A 132-amino-acid polypeptide reads, in one-letter code: Ig kappa chain V-III region MOPC 321 (132 aa).

An N-terminal signal peptide occupies residues 1–20 (METDTLLLWVLLLWVPGSTG). Residues 21–43 (DIVLTQSPASLAVSLGQRATISC) form a framework-1 region. Cysteine 43 and cysteine 112 are oxidised to a cystine. The segment at 44–58 (RASKSVNTYGNSFMZ) is complementarity-determining-1. Residues 59-73 (WYZZKPGZPPKLLIY) form a framework-2 region. A complementarity-determining-2 region spans residues 74–80 (RASNLZS). The tract at residues 81–112 (GIPARFSGSGSRTBFTLTIBPVZABDVATYFC) is framework-3. The complementarity-determining-3 stretch occupies residues 113-121 (ZZSBZBPWT). Residues 122–131 (FGSGTKLEIK) are framework-4.

The protein is Ig kappa chain V-III region MOPC 321 of Mus musculus (Mouse).